The primary structure comprises 264 residues: Thymidylate synthase (264 aa).

A dUMP-binding site is contributed by R21. H51 is a (6R)-5,10-methylene-5,6,7,8-tetrahydrofolate binding site. A dUMP-binding site is contributed by 126–127 (RR). C146 functions as the Nucleophile in the catalytic mechanism. Residues 166-169 (RSCD), N177, and 207-209 (HLY) each bind dUMP. D169 contributes to the (6R)-5,10-methylene-5,6,7,8-tetrahydrofolate binding site. A263 serves as a coordination point for (6R)-5,10-methylene-5,6,7,8-tetrahydrofolate.

This sequence belongs to the thymidylate synthase family. Bacterial-type ThyA subfamily. In terms of assembly, homodimer.

The protein resides in the cytoplasm. The catalysed reaction is dUMP + (6R)-5,10-methylene-5,6,7,8-tetrahydrofolate = 7,8-dihydrofolate + dTMP. The protein operates within pyrimidine metabolism; dTTP biosynthesis. In terms of biological role, catalyzes the reductive methylation of 2'-deoxyuridine-5'-monophosphate (dUMP) to 2'-deoxythymidine-5'-monophosphate (dTMP) while utilizing 5,10-methylenetetrahydrofolate (mTHF) as the methyl donor and reductant in the reaction, yielding dihydrofolate (DHF) as a by-product. This enzymatic reaction provides an intracellular de novo source of dTMP, an essential precursor for DNA biosynthesis. This is Thymidylate synthase from Salmonella arizonae (strain ATCC BAA-731 / CDC346-86 / RSK2980).